Reading from the N-terminus, the 549-residue chain is MSRRQTCSLLLIAFGLFYLVPLSNHGLWIPDETRYAQISQAMLLGGDWVSPHFLGLRYFEKPVAGYWMIALGQAVFGENLFGVRIASVVATALSVLLAYLLARRLWRDPRTSLACALLYASFGLIAGQSGYANLDPQFTFWVNLSLVALWHALDARSRRARLLGWTLLGLACGMGFLTKGFLAWLLPVLVALPYMLWQRRWRELLGYGALAVLAALLVCLPWALAVHAREADYWRFFFWHEHIRRFAGEDAQHSRPWWFYLPLLAVSCLPWSGLLPSALRQAWHERRQAPVVFLALWLLLPLAFFSLSRGKLPTYIMPCLLPLALLMGHALVQRLRLGNSVALRGNGLLNLGLALLALAALAYLQLRKPVYQEEPFELFLVLLVIGAWAAAGLAQWRYPLRAWAAPLLASWVLIALLPAAMPNHVVQNKTPDLFVAEHLDELTGARHLLSNDLGAASALAWRLRRSDVTLYDTRGELKYGLSYPEHSQRSVPLADIRQWLWRARQDGSVAVLLRINSASDRYQLALLPGDGERYRNGNLVLAILPQVRP.

Transmembrane regions (helical) follow at residues 9-29 (LLLI…GLWI), 80-100 (LFGV…LAYL), 112-132 (SLAC…SGYA), 133-153 (NLDP…WHAL), 176-196 (FLTK…PYML), 204-224 (LLGY…PWAL), 256-276 (PWWF…GLLP), 288-308 (QAPV…FSLS), 312-332 (LPTY…HALV), 346-366 (NGLL…YLQL), 376-396 (FELF…LAQW), and 402-422 (AWAA…AAMP).

The protein belongs to the glycosyltransferase 83 family.

The protein resides in the cell inner membrane. The catalysed reaction is 4-amino-4-deoxy-alpha-L-arabinopyranosyl di-trans,octa-cis-undecaprenyl phosphate + lipid IVA = lipid IIA + di-trans,octa-cis-undecaprenyl phosphate.. It participates in lipopolysaccharide metabolism; 4-amino-4-deoxy-beta-L-arabinose-lipid A biosynthesis. Functionally, catalyzes the transfer of the L-Ara4N moiety of the glycolipid undecaprenyl phosphate-alpha-L-Ara4N to lipid A. The modified arabinose is attached to lipid A and is required for resistance to polymyxin and cationic antimicrobial peptides. This Pseudomonas aeruginosa (strain LESB58) protein is Undecaprenyl phosphate-alpha-4-amino-4-deoxy-L-arabinose arabinosyl transferase.